Reading from the N-terminus, the 45-residue chain is uncharacterized protein (45 aa).

This is an uncharacterized protein from Haemophilus influenzae (strain ATCC 51907 / DSM 11121 / KW20 / Rd).